A 287-amino-acid chain; its full sequence is Putative sugar uptake protein EF_0928 (287 aa).

10 helical membrane-spanning segments follow: residues I5–A27, L32–I49, L53–G71, V84–F106, F116–A134, I155–L177, I182–K200, F207–M229, L234–L256, and M265–Y284.

It belongs to the GRP transporter (TC 2.A.7.5) family.

It is found in the cell membrane. This chain is Putative sugar uptake protein EF_0928, found in Enterococcus faecalis (strain ATCC 700802 / V583).